Reading from the N-terminus, the 181-residue chain is Protein GrpE (181 aa).

Belongs to the GrpE family. As to quaternary structure, homodimer.

The protein localises to the cytoplasm. Its function is as follows. Participates actively in the response to hyperosmotic and heat shock by preventing the aggregation of stress-denatured proteins, in association with DnaK and GrpE. It is the nucleotide exchange factor for DnaK and may function as a thermosensor. Unfolded proteins bind initially to DnaJ; upon interaction with the DnaJ-bound protein, DnaK hydrolyzes its bound ATP, resulting in the formation of a stable complex. GrpE releases ADP from DnaK; ATP binding to DnaK triggers the release of the substrate protein, thus completing the reaction cycle. Several rounds of ATP-dependent interactions between DnaJ, DnaK and GrpE are required for fully efficient folding. This Leptothrix cholodnii (strain ATCC 51168 / LMG 8142 / SP-6) (Leptothrix discophora (strain SP-6)) protein is Protein GrpE.